The following is a 570-amino-acid chain: Probable D-xylulose kinase A (570 aa).

Substrate contacts are provided by histidine 95, arginine 166, aspartate 282, and asparagine 283. Residues tryptophan 364, 469–470 (GG), and asparagine 473 each bind ATP.

It belongs to the FGGY kinase family.

The protein localises to the cytoplasm. The enzyme catalyses D-xylulose + ATP = D-xylulose 5-phosphate + ADP + H(+). In terms of biological role, highly specific D-xylulose kinase which participates in the catabolism of xylose. Xylose is a major component of hemicelluloses such as xylan. Most fungi utilize D-xylose via three enzymatic reactions, xylose reductase (XR), xylitol dehydrogenase (XDH), and xylulokinase, to form xylulose 5-phosphate, which enters pentose phosphate pathway. The protein is Probable D-xylulose kinase A (xkiA) of Aspergillus niger (strain ATCC MYA-4892 / CBS 513.88 / FGSC A1513).